The sequence spans 223 residues: UPF0758 protein FMG_0357 (223 aa).

One can recognise an MPN domain in the interval 101–223 (SLNDPDSVAE…SLSMRKGMYF (123 aa)). Zn(2+)-binding residues include His-172, His-174, and Asp-185. The JAMM motif signature appears at 172-185 (HNHPSGSLIPSNAD).

It belongs to the UPF0758 family.

In Finegoldia magna (strain ATCC 29328 / DSM 20472 / WAL 2508) (Peptostreptococcus magnus), this protein is UPF0758 protein FMG_0357.